The following is a 309-amino-acid chain: Pyrroline-5-carboxylate reductase 1, mitochondrial (309 aa).

Residue Ser-2 is modified to N-acetylserine. NADP(+)-binding positions include 6–11 and Ser-34; that span reads IGAGQL. NADPH is bound by residues Ala-8, Gln-10, Leu-11, Ser-34, Asp-36, Asn-56, Val-70, Lys-71, and Ala-97. NADP(+)-binding positions include Asn-56, 69-72, and 95-97; these read AVKP and CAA. Glu-164 lines the L-proline pocket. Asn-230 lines the NADPH pocket. 2 residues coordinate L-proline: Ala-237 and Thr-238. Phosphoserine occurs at positions 278 and 301.

The protein belongs to the pyrroline-5-carboxylate reductase family. Homodecamer; composed of 5 homodimers. Interacts with LTO1. Highly expressed in osteoblasts and skin.

The protein resides in the mitochondrion. It carries out the reaction L-proline + NADP(+) = (S)-1-pyrroline-5-carboxylate + NADPH + 2 H(+). The catalysed reaction is L-proline + NAD(+) = (S)-1-pyrroline-5-carboxylate + NADH + 2 H(+). Its pathway is amino-acid biosynthesis; L-proline biosynthesis; L-proline from L-glutamate 5-semialdehyde: step 1/1. Functionally, oxidoreductase that catalyzes the last step in proline biosynthesis, which corresponds to the reduction of pyrroline-5-carboxylate to L-proline using NAD(P)H. At physiologic concentrations, has higher specific activity in the presence of NADH. Involved in the cellular response to oxidative stress. This Mus musculus (Mouse) protein is Pyrroline-5-carboxylate reductase 1, mitochondrial.